The chain runs to 484 residues: Probable efflux pump outer membrane protein TtgC (484 aa).

A signal peptide spans 1–17 (MTKSLLSLAVTAFILGG). Cys-18 carries N-palmitoyl cysteine lipidation. Cys-18 carries the S-diacylglycerol cysteine lipid modification.

The protein belongs to the outer membrane factor (OMF) (TC 1.B.17) family.

The protein resides in the cell outer membrane. In terms of biological role, probable outer membrane component of the TtgABC efflux pump with unknown specificity. The sequence is that of Probable efflux pump outer membrane protein TtgC (ttgC) from Pseudomonas putida (strain ATCC 47054 / DSM 6125 / CFBP 8728 / NCIMB 11950 / KT2440).